The sequence spans 221 residues: Vesicle-associated membrane protein 713 (221 aa).

Residue A2 is modified to N-acetylalanine. The Cytoplasmic segment spans residues 2-190 (AIIFALVARG…RTIMWWRNVK (189 aa)). One can recognise a Longin domain in the interval 7–112 (LVARGTVVLS…SMNDEFSRVL (106 aa)). Residues 127-187 (RMSRIKGEMS…RRYRTIMWWR (61 aa)) enclose the v-SNARE coiled-coil homology domain. Residues 191–211 (LTIALILVLALVVYIAMAFVC) traverse the membrane as a helical; Anchor for type IV membrane protein segment. Topologically, residues 212 to 221 (HGPSLPSCFK) are vesicular.

This sequence belongs to the synaptobrevin family. In terms of assembly, interacts with subunits of the vacuole protein sorting (HOPS) complex including VPS11, VCL1, VPS18, VPS33, VPS39 and VPS41. As to expression, highly expressed in stems and roots. Detected in flowers and leaves.

It localises to the vacuole membrane. The protein localises to the prevacuolar compartment membrane. Involved in the targeting and/or fusion of transport vesicles to their target membrane. The polypeptide is Vesicle-associated membrane protein 713 (Arabidopsis thaliana (Mouse-ear cress)).